Here is a 442-residue protein sequence, read N- to C-terminus: N-acetyl-S-alkylcysteine sulfoxide monooxygenase (442 aa).

The FMN site is built by Asp58, Thr95, His145, Tyr149, Ser219, and Ser220.

Belongs to the NtaA/SnaA/DszA monooxygenase family. Homodimer.

It catalyses the reaction (R)-N-acetyl-S-benzyl-L-cysteine sulfoxide + FMNH2 + O2 = N-acetyl-S-hydroxy-L-cysteine + benzaldehyde + FMN + H2O + H(+). It participates in amino-acid metabolism. Involved in a cysteine salvage pathway from S-alkylcysteine. Catalyzes the C-S bond cleavage in N-acetyl-S-benzyl-L-cysteine sulfoxide leading to N-acetyl-S-hydroxy-L-cysteine and benzaldehyde. This pathway is likely important in the catabolism of alkylated cysteine generated by proteolysis of alkylated glutathione formed in the detoxification of a wide range of electrophiles. Has much less efficient activity with N-acetyl-S-methyl-L-cysteine sulfoxide as substrate. Cannot use S-alkylated L-cysteine sulfones and ketone analogs as substrates, demonstrating that the sulfoxide is required for activity. This Bacillus subtilis (strain 168) protein is N-acetyl-S-alkylcysteine sulfoxide monooxygenase.